Here is a 79-residue protein sequence, read N- to C-terminus: ATP synthase subunit c (79 aa).

A run of 2 helical transmembrane segments spans residues 11–31 (MAAA…IGIL) and 53–73 (FFIV…LGLY).

The protein belongs to the ATPase C chain family. F-type ATPases have 2 components, F(1) - the catalytic core - and F(0) - the membrane proton channel. F(1) has five subunits: alpha(3), beta(3), gamma(1), delta(1), epsilon(1). F(0) has three main subunits: a(1), b(2) and c(10-14). The alpha and beta chains form an alternating ring which encloses part of the gamma chain. F(1) is attached to F(0) by a central stalk formed by the gamma and epsilon chains, while a peripheral stalk is formed by the delta and b chains.

It localises to the cell inner membrane. In terms of biological role, f(1)F(0) ATP synthase produces ATP from ADP in the presence of a proton or sodium gradient. F-type ATPases consist of two structural domains, F(1) containing the extramembraneous catalytic core and F(0) containing the membrane proton channel, linked together by a central stalk and a peripheral stalk. During catalysis, ATP synthesis in the catalytic domain of F(1) is coupled via a rotary mechanism of the central stalk subunits to proton translocation. Key component of the F(0) channel; it plays a direct role in translocation across the membrane. A homomeric c-ring of between 10-14 subunits forms the central stalk rotor element with the F(1) delta and epsilon subunits. The protein is ATP synthase subunit c of Proteus mirabilis (strain HI4320).